The chain runs to 392 residues: MSIVCTFFLFLLNTSFAFAFAIPKPPIVRRLSTTVTSNSTASSCSANGNPIDECWRCDENWKDNRKNLADCAVGFGRDSIGGRAGEFYTVTDSGDDNPLNPTPGTLRYAATQDQPLWIIFDRDMVIQLKQDLQVASYKTIDGRGNNVQIAYGPCLTLYKVSNIIINNLYIHDCVPVKRNALSSLGGYSDGDGISIFESRDIWIDHCTLEKCYDGLIDAVNGSTDITISNSYMLNHNEVMLLGHSDEYSGDRDMRVTIAFNYFGEGLVQRMPRCRHGYFHIVNNIYRDWKMYAIGGSANPTIFSQGNVFIASNNQFTKEVTKRESADGDEEWKEWNWKSEGDEMVNGAFFTPSGKEDSPSYAKFSSMVARPASLLKTTHPSVGVLSCEIDQAC.

Residues 1–21 form the signal peptide; sequence MSIVCTFFLFLLNTSFAFAFA. Asparagine 38 is a glycosylation site (N-linked (GlcNAc...) asparagine). Positions 189, 213, and 217 each coordinate Ca(2+). Residue asparagine 220 is glycosylated (N-linked (GlcNAc...) asparagine). Residue arginine 269 is part of the active site.

It belongs to the polysaccharide lyase 1 family. Ca(2+) is required as a cofactor.

The catalysed reaction is Eliminative cleavage of (1-&gt;4)-alpha-D-galacturonan to give oligosaccharides with 4-deoxy-alpha-D-galact-4-enuronosyl groups at their non-reducing ends.. The protein operates within glycan metabolism; pectin degradation; 2-dehydro-3-deoxy-D-gluconate from pectin: step 2/5. This is Putative pectate lyase 21 from Arabidopsis thaliana (Mouse-ear cress).